Consider the following 223-residue polypeptide: Type III pantothenate kinase (223 aa).

17–24 (DIGNTRIH) is a binding site for ATP. Substrate contacts are provided by residues Tyr-81 and 85–88 (GIDR). Residue Asp-87 is the Proton acceptor of the active site. Asp-102 serves as a coordination point for K(+). Residue Ser-105 participates in ATP binding. A substrate-binding site is contributed by Thr-157.

Belongs to the type III pantothenate kinase family. Homodimer. It depends on NH4(+) as a cofactor. K(+) is required as a cofactor.

The protein resides in the cytoplasm. It catalyses the reaction (R)-pantothenate + ATP = (R)-4'-phosphopantothenate + ADP + H(+). It functions in the pathway cofactor biosynthesis; coenzyme A biosynthesis; CoA from (R)-pantothenate: step 1/5. In terms of biological role, catalyzes the phosphorylation of pantothenate (Pan), the first step in CoA biosynthesis. The polypeptide is Type III pantothenate kinase (Helicobacter pylori (strain J99 / ATCC 700824) (Campylobacter pylori J99)).